Consider the following 366-residue polypeptide: MKPFLRQQLARYTDRLGELEFLLSREDIMQDMKQFLLLSREHTEVGAVASRWARYQQLEADLSGAQELLRGSVDDPDMTAMAQEEIDNASAELQKLENELQRMLLPKDPDDARNAFVEIRAGTGGDESALFAADLLRMYTRYCERRGWKAEIISESPSELGGYKEVVIKIEGDHVYGALKFESGGHRVQRVPVTETQGRIHTSACTVAVLAEPDEAVAIQINPADLRIDTYRASGAGGQHINKTDSAVRITHLPTGIVAECQDGRSQHSNKAQALKVLTARIHEKDRSERAAKDAAERKGLIGSGDRSDRIRTYNFPQGRLTDHRINLTLYKLLTIMEGDLDDVVQALQAFEAAQQLAALELGAGA.

Residue Gln239 is modified to N5-methylglutamine.

It belongs to the prokaryotic/mitochondrial release factor family. Post-translationally, methylated by PrmC. Methylation increases the termination efficiency of RF1.

The protein resides in the cytoplasm. In terms of biological role, peptide chain release factor 1 directs the termination of translation in response to the peptide chain termination codons UAG and UAA. This is Peptide chain release factor 1 from Albidiferax ferrireducens (strain ATCC BAA-621 / DSM 15236 / T118) (Rhodoferax ferrireducens).